Reading from the N-terminus, the 416-residue chain is Queuine tRNA-ribosyltransferase accessory subunit 2 (416 aa).

Zn(2+) is bound by residues cysteine 323, cysteine 325, cysteine 328, and histidine 354.

This sequence belongs to the queuine tRNA-ribosyltransferase family. QTRT2 subfamily. In terms of assembly, heterodimer of a catalytic subunit and an accessory subunit. Zn(2+) is required as a cofactor.

Its subcellular location is the cytoplasm. Non-catalytic subunit of the queuine tRNA-ribosyltransferase (TGT) that catalyzes the base-exchange of a guanine (G) residue with queuine (Q) at position 34 (anticodon wobble position) in tRNAs with GU(N) anticodons (tRNA-Asp, -Asn, -His and -Tyr), resulting in the hypermodified nucleoside queuosine (7-(((4,5-cis-dihydroxy-2-cyclopenten-1-yl)amino)methyl)-7-deazaguanosine). This Drosophila mojavensis (Fruit fly) protein is Queuine tRNA-ribosyltransferase accessory subunit 2.